The chain runs to 130 residues: Lysozyme C (130 aa).

A C-type lysozyme domain is found at lysine 1 to leucine 130. 4 disulfide bridges follow: cysteine 6–cysteine 128, cysteine 30–cysteine 116, cysteine 65–cysteine 81, and cysteine 77–cysteine 95. Active-site residues include glutamate 35 and aspartate 53.

This sequence belongs to the glycosyl hydrolase 22 family. In terms of assembly, monomer.

It is found in the secreted. It carries out the reaction Hydrolysis of (1-&gt;4)-beta-linkages between N-acetylmuramic acid and N-acetyl-D-glucosamine residues in a peptidoglycan and between N-acetyl-D-glucosamine residues in chitodextrins.. Functionally, lysozymes have primarily a bacteriolytic function; those in tissues and body fluids are associated with the monocyte-macrophage system and enhance the activity of immunoagents. In Chelonia mydas (Green sea-turtle), this protein is Lysozyme C (LYZ).